A 168-amino-acid polypeptide reads, in one-letter code: Transcription antitermination protein NusB (168 aa).

This sequence belongs to the NusB family.

In terms of biological role, involved in transcription antitermination. Required for transcription of ribosomal RNA (rRNA) genes. Binds specifically to the boxA antiterminator sequence of the ribosomal RNA (rrn) operons. This Chlamydia trachomatis serovar A (strain ATCC VR-571B / DSM 19440 / HAR-13) protein is Transcription antitermination protein NusB.